The chain runs to 154 residues: Probable deoxyuridine 5'-triphosphate nucleotidohydrolase (154 aa).

The protein belongs to the dCTP deaminase family. Archaeal dUTPase subfamily.

The enzyme catalyses dUTP + H2O = dUMP + diphosphate + H(+). Its pathway is pyrimidine metabolism; dUMP biosynthesis; dUMP from dCTP (dUTP route): step 2/2. Functionally, this enzyme is involved in nucleotide metabolism: it produces dUMP, the immediate precursor of thymidine nucleotides and it decreases the intracellular concentration of dUTP so that uracil cannot be incorporated into DNA. This Methanopyrus kandleri (strain AV19 / DSM 6324 / JCM 9639 / NBRC 100938) protein is Probable deoxyuridine 5'-triphosphate nucleotidohydrolase.